Here is a 1197-residue protein sequence, read N- to C-terminus: Probable DNA polymerase (1197 aa).

This sequence belongs to the DNA polymerase type-B family.

The protein resides in the mitochondrion. The catalysed reaction is DNA(n) + a 2'-deoxyribonucleoside 5'-triphosphate = DNA(n+1) + diphosphate. The polypeptide is Probable DNA polymerase (Podospora anserina (Pleurage anserina)).